Reading from the N-terminus, the 207-residue chain is ATP-dependent Clp protease proteolytic subunit (207 aa).

The active-site Nucleophile is the Ser-111. Residue His-136 is part of the active site.

Belongs to the peptidase S14 family. In terms of assembly, fourteen ClpP subunits assemble into 2 heptameric rings which stack back to back to give a disk-like structure with a central cavity, resembling the structure of eukaryotic proteasomes.

The protein resides in the cytoplasm. It catalyses the reaction Hydrolysis of proteins to small peptides in the presence of ATP and magnesium. alpha-casein is the usual test substrate. In the absence of ATP, only oligopeptides shorter than five residues are hydrolyzed (such as succinyl-Leu-Tyr-|-NHMec, and Leu-Tyr-Leu-|-Tyr-Trp, in which cleavage of the -Tyr-|-Leu- and -Tyr-|-Trp bonds also occurs).. Functionally, cleaves peptides in various proteins in a process that requires ATP hydrolysis. Has a chymotrypsin-like activity. Plays a major role in the degradation of misfolded proteins. The protein is ATP-dependent Clp protease proteolytic subunit of Burkholderia mallei (strain ATCC 23344).